The chain runs to 122 residues: Large ribosomal subunit protein uL14 (122 aa).

It belongs to the universal ribosomal protein uL14 family. In terms of assembly, part of the 50S ribosomal subunit. Forms a cluster with proteins L3 and L19. In the 70S ribosome, L14 and L19 interact and together make contacts with the 16S rRNA in bridges B5 and B8.

Functionally, binds to 23S rRNA. Forms part of two intersubunit bridges in the 70S ribosome. The chain is Large ribosomal subunit protein uL14 from Gemmatimonas aurantiaca (strain DSM 14586 / JCM 11422 / NBRC 100505 / T-27).